The primary structure comprises 325 residues: uncharacterized protein (325 aa).

The disordered stretch occupies residues 1 to 75 (MSQPPEHPGN…PPPGYPTHLQ (75 aa)). Pro residues-rich tracts occupy residues 24–39 (YPPPGYGAPPPPPGYG) and 50–70 (YNAPPPPPGYGPPPGPPPPGY). The next 4 membrane-spanning stretches (helical) occupy residues 96 to 116 (AVTLVVPVLAYAVALAAVIGA), 153 to 173 (IVMFLGYIALFALVLYMHAGI), 205 to 225 (LLIVALTFIGGLLCVIPGLIF), and 273 to 293 (LVGELLCFVGMLIGIPVAALI).

It is found in the cell membrane. This is an uncharacterized protein from Mycobacterium tuberculosis (strain CDC 1551 / Oshkosh).